Here is a 517-residue protein sequence, read N- to C-terminus: MARMGLAGAAGRWWGLALGLTAFFLPGVHSQVVQVNDSMYGFIGTDVVLHCSFANPLPSVKITQVTWQKSTNGSKQNVAIYNPSMGVSVLAPYRERVEFLRPSFTDGTIRLSRLELEDEGVYICEFATFPTGNRESQLNLTVMAKPTNWIEGTQAVLRAKKGQDDKVLVATCTSANGKPPSVVSWETRLKGEAEYQEIRNPNGTVTVISRYRLVPSREAHQQSLACIVNYHMDRFKESLTLNVQYEPEVTIEGFDGNWYLQRMDVKLTCKADANPPATEYHWTTLNGSLPKGVEAQNRTLFFKGPINYSLAGTYICEATNPIGTRSGQVEVNITEFPYTPSPPEHGRRAGPVPTAIIGGVAGSILLVLIVVGGIVVALRRRRHTFKGDYSTKKHVYGNGYSKAGIPQHHPPMAQNLQYPDDSDDEKKAGPLGGSSYEEEEEEEEGGGGGERKVGGPHPKYDEDAKRPYFTVDEAEARQDGYGDRTLGYQYDPEQLDLAENMVSQNDGSFISKKEWYV.

Positions 1-30 (MARMGLAGAAGRWWGLALGLTAFFLPGVHS) are cleaved as a signal peptide. The Ig-like V-type domain maps to 31 to 141 (QVVQVNDSMY…GNRESQLNLT (111 aa)). Over 31 to 355 (QVVQVNDSMY…GRRAGPVPTA (325 aa)) the chain is Extracellular. N-linked (GlcNAc...) asparagine glycans are attached at residues Asn36, Asn72, and Asn139. A disulfide bridge links Cys51 with Cys124. 2 consecutive Ig-like C2-type domains span residues 149-238 (WIEG…FKES) and 247-334 (PEVT…VNIT). Disulfide bonds link Cys172–Cys226 and Cys269–Cys316. Asn202 carries N-linked (GlcNAc...) (complex) asparagine glycosylation. Residues 282–299 (WTTLNGSLPKGVEAQNRT) form an interaction with FGFR region. N-linked (GlcNAc...) asparagine glycans are attached at residues Asn286, Asn297, Asn307, and Asn332. A helical membrane pass occupies residues 356 to 376 (IIGGVAGSILLVLIVVGGIVV). Topologically, residues 377 to 517 (ALRRRRHTFK…SFISKKEWYV (141 aa)) are cytoplasmic. Residues 399–488 (GYSKAGIPQH…DGYGDRTLGY (90 aa)) are disordered. A phosphoserine mark is found at Ser422, Ser434, and Ser435. Tyr436 carries the post-translational modification Phosphotyrosine. The span at 436–445 (YEEEEEEEEG) shows a compositional bias: acidic residues. The segment covering 449-466 (GERKVGGPHPKYDEDAKR) has biased composition (basic and acidic residues). At Ser511 the chain carries Phosphoserine.

It belongs to the nectin family. Cis- and trans-homodimer. Can form trans-heterodimers with NECTIN3 and with NECTIN4. Interaction between NECTIN1 and NECTIN3 on the pre- and postsynaptic sites, respectively, initiates the formation of puncta adherentia junctions between axons and dendrites. Interacts (via cytoplasmic domain) with AFDN (via PDZ domain); this interaction recruits NECTIN1 to cadherin-based adherens junctions and provides a connection with the actin cytoskeleton. Interacts with integrin alphaV/beta3. Interacts (via Ig-like C2-type domain 2) with FGFR1, FGFR2 and FGFR3. In terms of assembly, (Microbial infection) Interacts with herpes simplex virus 1/HHV-1, herpes simplex virus 2/HHV-2, and pseudorabies virus/PRV envelope glycoprotein D. In terms of processing, (Microbial infection) Ubiquitinated by CBL following infection by herpes simplex virus 1/HHV-1 and association with HHV-1 envelope glycoprotein D, leading to its removal from cell surface.

Its subcellular location is the cell membrane. The protein resides in the cell junction. The protein localises to the adherens junction. It is found in the presynaptic cell membrane. It localises to the secreted. Its function is as follows. Cell adhesion molecule that promotes cell-cell contacts and plays important roles in the development of the nervous system. Acts by forming homophilic or heterophilic trans-dimers. Heterophilic interactions have been detected between NECTIN1 and NECTIN3 and between NECTIN1 and NECTIN4. Involved in axon guidance by promoting contacts between the commissural axons and the floor plate cells. Involved in synaptogegesis. Has some neurite outgrowth-promoting activity. Promotes formation of checkerboard-like cellular pattern of hair cells and supporting cells in the auditory epithelium via heterophilic interaction with NECTIN3: NECTIN1 is present in the membrane of hair cells and associates with NECTIN3 on supporting cells, thereby mediating heterotypic adhesion between these two cell types. Required for enamel mineralization. Functionally, (Microbial infection) Acts as a receptor for herpes simplex virus 1/HHV-1, herpes simplex virus 2/HHV-2, and pseudorabies virus/PRV. Constitutes the major receptor for herpes simplex virus 1/HHV-1 entry into host cells. The chain is Nectin-1 from Homo sapiens (Human).